We begin with the raw amino-acid sequence, 1318 residues long: Maestro heat-like repeat family member 5 (1318 aa).

The tract at residues 1-38 (MDRQCSERPYSCTPTGRVSSAVSQNSRISPPVSTSMKD) is disordered. Residues 12–38 (CTPTGRVSSAVSQNSRISPPVSTSMKD) are compositionally biased toward polar residues. The stretch at 581–618 (DELHFLLSHLYIWLASEKAHERQRAVHSCMILLKFLNH) is one HEAT 1 repeat. The tract at residues 676 to 695 (ESQAPKELSQAHSDGAPLWN) is disordered. HEAT repeat units lie at residues 769-811 (GAKL…SHTC), 840-880 (PTSH…LLAA), 996-1033 (RQIP…SPVL), 1037-1074 (LPKQ…HPDK), 1076-1113 (SLLQ…RLGA), 1118-1155 (SQSL…AMAD), 1164-1200 (QVHQ…LLRW), and 1278-1315 (VDTN…VSAR).

The protein is Maestro heat-like repeat family member 5 (MROH5) of Homo sapiens (Human).